We begin with the raw amino-acid sequence, 400 residues long: D(3) dopamine receptor (400 aa).

At 1–32 the chain is on the extracellular side; sequence MAPLSQLSGHLNYTCGVENSTGASQARPHAYY. Residues asparagine 12 and asparagine 19 are each glycosylated (N-linked (GlcNAc...) asparagine). Residues 33 to 55 traverse the membrane as a helical segment; that stretch reads ALSYCALILAIVFGNGLVCMAVL. Over 56–65 the chain is Cytoplasmic; that stretch reads KERALQTTTN. The helical transmembrane segment at 66–88 threads the bilayer; the sequence is YLVVSLAVADLLVATLVMPWVVY. Over 89 to 104 the chain is Extracellular; it reads LEVTGGVWNFSRVCCD. Asparagine 97 carries an N-linked (GlcNAc...) asparagine glycan. Cysteines 103 and 181 form a disulfide. Residues 105-126 traverse the membrane as a helical segment; that stretch reads VFVTLDVMMCTASILNLCAISI. The Cytoplasmic portion of the chain corresponds to 127 to 149; the sequence is DRYTAVVMPVHYQHGTGQSSCRR. Residues 150 to 170 traverse the membrane as a helical segment; the sequence is VTLMITAVWVLAFAVSCPLLF. Over 171-187 the chain is Extracellular; it reads GFNTTGDPTVCSISNPD. N-linked (GlcNAc...) asparagine glycosylation is present at asparagine 173. A helical transmembrane segment spans residues 188 to 209; the sequence is FVIYSSVVSFYLPFGVTVLVYA. Residues 210–329 lie on the Cytoplasmic side of the membrane; that stretch reads RIYVVLKQRR…VPLREKKATQ (120 aa). Residues 330–351 traverse the membrane as a helical segment; it reads MVAIVLGAFIVCWLPFFLTHVL. At 352 to 366 the chain is on the extracellular side; the sequence is NTHCQTCHVSPELYS. Cysteine 355 and cysteine 358 are oxidised to a cystine. Residues 367 to 386 form a helical membrane-spanning segment; sequence ATTWLGYVNSALNPVIYTTF. The Cytoplasmic segment spans residues 387-400; that stretch reads NIEFRKAFLKILSC.

Belongs to the G-protein coupled receptor 1 family. In terms of assembly, interacts with CLIC6. Interacts with GRK4. Interacts with PALM. Interacts with FLNA (via filamin repeat 21); increases PKA-mediated phosphorylation of FLNA. Post-translationally, phosphorylated by GRK4. Palmitoylated.

The protein resides in the cell membrane. Functionally, dopamine receptor whose activity is mediated by G proteins which inhibit adenylyl cyclase. Promotes cell proliferation. This chain is D(3) dopamine receptor (DRD3), found in Chlorocebus aethiops (Green monkey).